The primary structure comprises 145 residues: Bacilliredoxin GK2368 (145 aa).

Belongs to the bacilliredoxin family.

In Geobacillus kaustophilus (strain HTA426), this protein is Bacilliredoxin GK2368.